Reading from the N-terminus, the 562-residue chain is SLAIN motif-containing protein-like (562 aa).

3 disordered regions span residues 292–313 (QDYASSSASVSRRSSSASLHSL), 344–381 (HRYSPSPLSSPRCQSPSAAESRATTSRIRPPRRSIQNH), and 409–562 (SLEA…DGCY). Composition is skewed to low complexity over residues 295 to 311 (ASSSASVSRRSSSASLH) and 345 to 355 (RYSPSPLSSPR). Composition is skewed to polar residues over residues 356–370 (CQSPSAAESRATTSR), 424–442 (QGPSSRLTRMQQPSTSTPP), 465–531 (VSTS…STVP), and 539–553 (SRRSLPSAKMNSTLG).

It belongs to the SLAIN motif-containing family.

The protein is SLAIN motif-containing protein-like of Xenopus laevis (African clawed frog).